Reading from the N-terminus, the 381-residue chain is Odorant receptor 46a, isoform A (381 aa).

At 1–37 (MSKGVEIFYKGQKAFLNILSLWPQIERRWRIIHQVNY) the chain is on the cytoplasmic side. Residues 38–58 (VHVIVFWVLLFDLLLVLHVMA) traverse the membrane as a helical segment. Asn59 carries an N-linked (GlcNAc...) asparagine glycan. Topologically, residues 59-65 (NLSYMSE) are extracellular. The chain crosses the membrane as a helical span at residues 66–86 (VVKAIFILATSAGHTTKLLSI). Over 87–127 (KANNVQMEELFRRLDNEEFRPRGANEELIFAAACERSRKLR) the chain is Cytoplasmic. A helical transmembrane segment spans residues 128 to 148 (DFYGALSFAALSMILIPQFAL). At 149 to 170 (DWSHLPLKTYNPLGENTGSPAY) the chain is on the extracellular side. A helical transmembrane segment spans residues 171–191 (WLLYCYQCLALSVSCITNIGF). Topologically, residues 192-255 (DSLCSSLFIF…KTVERLLCKP (64 aa)) are cytoplasmic. A helical membrane pass occupies residues 256–276 (ISVQIFCSVLVLTANFYAIAV). Topologically, residues 277-287 (LSDERLELFKY) are extracellular. Residues 288–308 (VTYQACMLIQIFILCYYAGEV) traverse the membrane as a helical segment. The Cytoplasmic segment spans residues 309 to 355 (TQRSLDLPHELYKTSWVDWDYRSRRIALLFMQRLHSTLRIRTLNPSL). A helical transmembrane segment spans residues 356-376 (GFDLMLFSSIVNCSYSYFALL). Residues 377 to 381 (KRVNS) are Extracellular-facing.

Belongs to the insect chemoreceptor superfamily. Heteromeric odorant receptor channel (TC 1.A.69) family. Or2a subfamily. In terms of assembly, interacts with Orco. Complexes exist early in the endomembrane system in olfactory sensory neurons (OSNs), coupling these complexes to the conserved ciliary trafficking pathway. In terms of tissue distribution, isoform A is expressed in a subset of 17 olfactory receptor neurons in the maxillary palp.

The protein resides in the cell membrane. Its function is as follows. Odorant receptor which mediates acceptance or avoidance behavior, depending on its substrates. The odorant receptor repertoire encodes a large collection of odor stimuli that vary widely in identity, intensity, and duration. May form a complex with Orco to form odorant-sensing units, providing sensitive and prolonged odorant signaling and calcium permeability. This chain is Odorant receptor 46a, isoform A (Or46a), found in Drosophila melanogaster (Fruit fly).